The sequence spans 405 residues: Tryptophan synthase beta chain (405 aa).

K95 carries the post-translational modification N6-(pyridoxal phosphate)lysine.

The protein belongs to the TrpB family. As to quaternary structure, tetramer of two alpha and two beta chains. Pyridoxal 5'-phosphate is required as a cofactor.

The catalysed reaction is (1S,2R)-1-C-(indol-3-yl)glycerol 3-phosphate + L-serine = D-glyceraldehyde 3-phosphate + L-tryptophan + H2O. It participates in amino-acid biosynthesis; L-tryptophan biosynthesis; L-tryptophan from chorismate: step 5/5. Its function is as follows. The beta subunit is responsible for the synthesis of L-tryptophan from indole and L-serine. The chain is Tryptophan synthase beta chain (trpB) from Pseudomonas putida (Arthrobacter siderocapsulatus).